A 428-amino-acid chain; its full sequence is Serine--tRNA ligase (428 aa).

231–233 (TSE) contributes to the L-serine binding site. Residues 262–264 (RRE) and Val-278 contribute to the ATP site. Glu-285 is an L-serine binding site. 349 to 352 (ELTS) lines the ATP pocket. Thr-384 lines the L-serine pocket.

It belongs to the class-II aminoacyl-tRNA synthetase family. Type-1 seryl-tRNA synthetase subfamily. Homodimer. The tRNA molecule binds across the dimer.

The protein localises to the cytoplasm. It carries out the reaction tRNA(Ser) + L-serine + ATP = L-seryl-tRNA(Ser) + AMP + diphosphate + H(+). The catalysed reaction is tRNA(Sec) + L-serine + ATP = L-seryl-tRNA(Sec) + AMP + diphosphate + H(+). It participates in aminoacyl-tRNA biosynthesis; selenocysteinyl-tRNA(Sec) biosynthesis; L-seryl-tRNA(Sec) from L-serine and tRNA(Sec): step 1/1. In terms of biological role, catalyzes the attachment of serine to tRNA(Ser). Is also able to aminoacylate tRNA(Sec) with serine, to form the misacylated tRNA L-seryl-tRNA(Sec), which will be further converted into selenocysteinyl-tRNA(Sec). The protein is Serine--tRNA ligase of Bifidobacterium longum (strain DJO10A).